The primary structure comprises 1103 residues: Mediator of RNA polymerase II transcription subunit 14 (1103 aa).

2 disordered regions span residues 22–61 and 1043–1067; these read LNGVSSAPAGSSQLGNPVGLHNGSLPTNGVQHPDSRGSDE and TTPKALDSRTSHDAPAANNQSPAIR. A compositionally biased stretch (polar residues) spans 23-36; it reads NGVSSAPAGSSQLG.

Belongs to the Mediator complex subunit 14 family. Component of the Mediator complex.

Its subcellular location is the nucleus. Component of the Mediator complex, a coactivator involved in the regulated transcription of nearly all RNA polymerase II-dependent genes. Mediator functions as a bridge to convey information from gene-specific regulatory proteins to the basal RNA polymerase II transcription machinery. Mediator is recruited to promoters by direct interactions with regulatory proteins and serves as a scaffold for the assembly of a functional preinitiation complex with RNA polymerase II and the general transcription factors. In Emericella nidulans (strain FGSC A4 / ATCC 38163 / CBS 112.46 / NRRL 194 / M139) (Aspergillus nidulans), this protein is Mediator of RNA polymerase II transcription subunit 14 (rgr1).